A 491-amino-acid chain; its full sequence is MQVIETLAEGLKRELKVVIPADEMQTRMNERLADVKDRVRINGFRPGKVPVAHLKKVYGKSIMAELVNEIVRDKPTEILTSRGEKSATQPEVAMTEDEAEADKILKAEADFEFTLAYEIIPAIELKDATGIKVTREVVEIAEDEVNEQILRIAESARTYESKKGKAANGDRVTIDYLGKVDGVAFDGGKDEDAELVLGSNRFIPGFEEQLVGVKAGDEKTITVTFPADYPAANLAGKEATFDITVKDVAAAAPIEINDELATKLGLESADKLKEIVRGQIESQYGSVTRQKVKRQLLDQLDELYQFETPERLVNAEFENIWRQINTDLEQAGKTFADEDTTEEEARAEYRKLAERRVRLGLVLSEIGEKAGVQVSDDEMQRSLFEQLRQFPGQEKQILDYFKNTPGAAASLRAPLFEEKVVDHLLSEVAVTDKTVSKDELMAEDEAEDKPAKKAPAKKKAAAKAEAGEGEEAAAPKKKAPAKKKAADDSAE.

The 86-residue stretch at Gly169 to Ile254 folds into the PPIase FKBP-type domain. The disordered stretch occupies residues Lys433 to Glu491. A compositionally biased stretch (basic residues) spans Lys452–Ala461.

It belongs to the FKBP-type PPIase family. Tig subfamily.

The protein resides in the cytoplasm. The enzyme catalyses [protein]-peptidylproline (omega=180) = [protein]-peptidylproline (omega=0). Its function is as follows. Involved in protein export. Acts as a chaperone by maintaining the newly synthesized protein in an open conformation. Functions as a peptidyl-prolyl cis-trans isomerase. The sequence is that of Trigger factor from Sinorhizobium fredii (strain NBRC 101917 / NGR234).